Reading from the N-terminus, the 199-residue chain is DnaJ homolog subfamily C member 5B (199 aa).

A Phosphoserine modification is found at S14. Residues 19–84 enclose the J domain; it reads ALYEILGLHK…SKRSIYDKYG (66 aa).

In terms of assembly, interacts with the chaperone complex consisting of HSC70 and SGTA. Post-translationally, palmitoylated. Palmitoylation is not required for membrane association. Testis specific.

The protein resides in the membrane. The protein is DnaJ homolog subfamily C member 5B (DNAJC5B) of Homo sapiens (Human).